The chain runs to 23 residues: Caerin-4.1 (23 aa).

In terms of tissue distribution, expressed by the skin parotoid and/or rostral glands.

The protein resides in the secreted. Its function is as follows. Antibacterial peptide, that adopts an alpha helical conformation which can disrupt bacterial membranes. Each caerin displays a different antimicrobial specificity. This Ranoidea caerulea (Green tree frog) protein is Caerin-4.1.